The primary structure comprises 242 residues: C-reactive protein 1.1 (242 aa).

Positions 1-24 (MKTFHGPTCGTAVSLCLLLFLTSA) are cleaved as a signal peptide. Positions 30–241 (ITSKVKFPPS…GVVLSPNEIC (212 aa)) constitute a Pentraxin (PTX) domain. Phosphocholine contacts are provided by threonine 60 and tyrosine 63. 2 disulfide bridges follow: cysteine 62–cysteine 125 and cysteine 112–cysteine 144. The Ca(2+) site is built by aspartate 85 and asparagine 86. Asparagine 147 carries N-linked (GlcNAc...) asparagine glycosylation. Residues glutamine 169, aspartate 170, and glutamine 180 each contribute to the Ca(2+) site. A disulfide bridge connects residues cysteine 207 and cysteine 241.

Belongs to the pentraxin family. Homopentamer. Pentraxin (or pentaxin) have a discoid arrangement of 5 non-covalently bound subunits. Ca(2+) is required as a cofactor.

It is found in the secreted. Functionally, might serve the role of immunoglobulins. This chain is C-reactive protein 1.1, found in Limulus polyphemus (Atlantic horseshoe crab).